The primary structure comprises 947 residues: Protocadherin alpha-4 (947 aa).

The first 29 residues, 1 to 29 (MEFSWGSGQESQRLLLSFLFLAIWEPGNS), serve as a signal peptide directing secretion. Cadherin domains follow at residues 30-133 (QLHY…PPTF), 134-242 (PTTQ…SPVF), 243-350 (DRSL…APEL), 351-455 (EFKS…APAF), 456-565 (AQPE…APTL), and 573-681 (SGGI…APSR). Residues 30 to 697 (QLHYSIPEEA…NAEASLVDVN (668 aa)) are Extracellular-facing. Cysteine 96 and cysteine 102 form a disulfide bridge. N-linked (GlcNAc...) asparagine glycans are attached at residues asparagine 257 and asparagine 265. The N-linked (GlcNAc...) asparagine glycan is linked to asparagine 548. Residues 698–718 (VYLIIAICAVSSLLVLTLLLY) traverse the membrane as a helical segment. Residues 719–947 (SALRCSTVPS…GNSTTDNSDQ (229 aa)) are Cytoplasmic-facing. PXXP repeat units lie at residues 734 to 737 (PPKP), 774 to 777 (PSLS), 796 to 799 (PRQP), 829 to 832 (PGGP), 870 to 873 (PGNP), and 888 to 891 (PGSP). The 6 X 4 AA repeats of P-X-X-P stretch occupies residues 734–891 (PPKPVMVCSS…PDKFIIPGSP (158 aa)). The required for interaction with FYN stretch occupies residues 738–947 (VMVCSSAVGS…GNSTTDNSDQ (210 aa)). Disordered regions lie at residues 761–805 (GEYP…DWRY) and 824–853 (ILRA…EVSP). A disordered region spans residues 897–947 (RQESANNQIDKSDFITFGKKEETKKKKKKKKGNKTQEKKEKGNSTTDNSDQ). Basic and acidic residues predominate over residues 906–920 (DKSDFITFGKKEETK).

As to quaternary structure, forms homodimers in trans (molecules expressed by two different cells). Forms promiscuous heterodimers in cis (at the plasma membrane of the same cell) with other protocadherins. Interacts with FYN. In terms of tissue distribution, detected in brain.

The protein localises to the cell membrane. Its function is as follows. Calcium-dependent cell-adhesion protein involved in cells self-recognition and non-self discrimination. Thereby, it is involved in the establishment and maintenance of specific neuronal connections in the brain. This chain is Protocadherin alpha-4, found in Rattus norvegicus (Rat).